Here is a 120-residue protein sequence, read N- to C-terminus: UPF0344 protein lin2366 (120 aa).

4 consecutive transmembrane segments (helical) span residues 3–23 (GYVHLISWVAIVVLTVTALLI), 33–53 (MLQMINRVFYILVILSGIMMV), 62–82 (ILAIFKILMGIIVIGVVEMLL), and 92–112 (GMFLMIFIIVVVITVSLGFYL).

The protein belongs to the UPF0344 family.

It is found in the cell membrane. This chain is UPF0344 protein lin2366, found in Listeria innocua serovar 6a (strain ATCC BAA-680 / CLIP 11262).